The sequence spans 101 residues: Small ribosomal subunit protein uS14 (101 aa).

Residues methionine 1–histidine 21 are disordered. Residues glutamate 11–histidine 21 show a composition bias toward basic residues.

It belongs to the universal ribosomal protein uS14 family. In terms of assembly, part of the 30S ribosomal subunit. Contacts proteins S3 and S10.

Functionally, binds 16S rRNA, required for the assembly of 30S particles and may also be responsible for determining the conformation of the 16S rRNA at the A site. The protein is Small ribosomal subunit protein uS14 of Rickettsia canadensis (strain McKiel).